The following is a 156-amino-acid chain: Small ribosomal subunit protein uS7 (156 aa).

Belongs to the universal ribosomal protein uS7 family. Part of the 30S ribosomal subunit. Contacts proteins S9 and S11.

Its function is as follows. One of the primary rRNA binding proteins, it binds directly to 16S rRNA where it nucleates assembly of the head domain of the 30S subunit. Is located at the subunit interface close to the decoding center, probably blocks exit of the E-site tRNA. The protein is Small ribosomal subunit protein uS7 of Heliobacterium modesticaldum (strain ATCC 51547 / Ice1).